A 229-amino-acid polypeptide reads, in one-letter code: Flagellar brake protein YcgR (229 aa).

Residues 134–218 (QLSLRVLDVS…GERALQRYID (85 aa)) form the PilZ domain.

It belongs to the YcgR family. As to quaternary structure, monomer. Interacts with the flagellar basal bodies.

It is found in the bacterial flagellum basal body. Its function is as follows. Acts as a flagellar brake, regulating swimming and swarming in a bis-(3'-5') cyclic diguanylic acid (c-di-GMP)-dependent manner. Binds 1 c-di-GMP dimer per subunit. Increasing levels of c-di-GMP lead to decreased motility. The protein is Flagellar brake protein YcgR of Methylibium petroleiphilum (strain ATCC BAA-1232 / LMG 22953 / PM1).